Here is a 79-residue protein sequence, read N- to C-terminus: Sec-independent protein translocase protein TatA (79 aa).

A helical transmembrane segment spans residues 1-21 (MGSLSIWHWIVVIAVVLLLFG). The segment covering 42-60 (GLQDDEKTAEKPDAVKSLD) has biased composition (basic and acidic residues). Residues 42–79 (GLQDDEKTAEKPDAVKSLDHNATTGTPPNRTDVGSKAV) are disordered. Residues 61-70 (HNATTGTPPN) show a composition bias toward polar residues.

This sequence belongs to the TatA/E family. The Tat system comprises two distinct complexes: a TatABC complex, containing multiple copies of TatA, TatB and TatC subunits, and a separate TatA complex, containing only TatA subunits. Substrates initially bind to the TatABC complex, which probably triggers association of the separate TatA complex to form the active translocon.

It localises to the cell inner membrane. In terms of biological role, part of the twin-arginine translocation (Tat) system that transports large folded proteins containing a characteristic twin-arginine motif in their signal peptide across membranes. TatA could form the protein-conducting channel of the Tat system. In Rhodopseudomonas palustris (strain HaA2), this protein is Sec-independent protein translocase protein TatA.